The chain runs to 248 residues: 2,3-bisphosphoglycerate-dependent phosphoglycerate mutase (248 aa).

Residues 7–14, 20–21, Arg-59, 86–89, Lys-97, 113–114, and 182–183 contribute to the substrate site; these read RHGESIWN, TG, ERHY, RR, and GN. His-8 (tele-phosphohistidine intermediate) is an active-site residue. Residue Glu-86 is the Proton donor/acceptor of the active site.

This sequence belongs to the phosphoglycerate mutase family. BPG-dependent PGAM subfamily.

It catalyses the reaction (2R)-2-phosphoglycerate = (2R)-3-phosphoglycerate. Its pathway is carbohydrate degradation; glycolysis; pyruvate from D-glyceraldehyde 3-phosphate: step 3/5. In terms of biological role, catalyzes the interconversion of 2-phosphoglycerate and 3-phosphoglycerate. The protein is 2,3-bisphosphoglycerate-dependent phosphoglycerate mutase of Methylacidiphilum infernorum (isolate V4) (Methylokorus infernorum (strain V4)).